Reading from the N-terminus, the 247-residue chain is Probable transcriptional regulatory protein DvMF_3201 (247 aa).

Residues 1–21 (MAGHSKWANIQHRKGRQDAKR) are disordered.

Belongs to the TACO1 family.

Its subcellular location is the cytoplasm. This Nitratidesulfovibrio vulgaris (strain DSM 19637 / Miyazaki F) (Desulfovibrio vulgaris) protein is Probable transcriptional regulatory protein DvMF_3201.